Reading from the N-terminus, the 192-residue chain is UPF0312 protein YPK_1931 (192 aa).

The first 23 residues, 1-23 (MINKTLLGLSLGALMFTAGSAVA), serve as a signal peptide directing secretion.

This sequence belongs to the UPF0312 family. Type 1 subfamily.

It localises to the periplasm. This chain is UPF0312 protein YPK_1931, found in Yersinia pseudotuberculosis serotype O:3 (strain YPIII).